The following is an 880-amino-acid chain: Leucine--tRNA ligase (880 aa).

The 'HIGH' region motif lies at 46 to 56; that stretch reads PYPSGALHMGH. A 'KMSKS' region motif is present at residues 638–642; that stretch reads KMSKS. An ATP-binding site is contributed by K641.

The protein belongs to the class-I aminoacyl-tRNA synthetase family.

It is found in the cytoplasm. The enzyme catalyses tRNA(Leu) + L-leucine + ATP = L-leucyl-tRNA(Leu) + AMP + diphosphate. The sequence is that of Leucine--tRNA ligase from Stenotrophomonas maltophilia (strain K279a).